Reading from the N-terminus, the 660-residue chain is Glycogen debranching enzyme (660 aa).

D338 functions as the Nucleophile in the catalytic mechanism. E373 (proton donor) is an active-site residue. Residues 460–472 are compositionally biased toward basic and acidic residues; it reads NEANGEDNRDGAW. The tract at residues 460–482 is disordered; sequence NEANGEDNRDGAWENHSNNHGYE.

The protein belongs to the glycosyl hydrolase 13 family.

The enzyme catalyses Hydrolysis of (1-&gt;6)-alpha-D-glucosidic linkages to branches with degrees of polymerization of three or four glucose residues in limit dextrin.. It functions in the pathway glycan degradation; glycogen degradation. Functionally, removes maltotriose and maltotetraose chains that are attached by 1,6-alpha-linkage to the limit dextrin main chain, generating a debranched limit dextrin. The protein is Glycogen debranching enzyme of Cronobacter sakazakii (strain ATCC BAA-894) (Enterobacter sakazakii).